The chain runs to 1300 residues: MESTECVRVAVNIRPLITPELLNGCTDCITVAPKEPQVHIGSHTFTYDFVYGNGGYPCSEIYNHCVAPLVDALFKGYNATVLAYGQTGSGKTYTMGTNYSGDCTNGGVIPNVMEDIFRRVETTKDSSELLIRVSFIEIFKEEVFDLLDSNSSALLKNDSGVQAKHTALSRAPIQIRETASGGITLAGVTEAEVKTKEEMGSFLARGSLSRATGSTNMNSQSSRSHAIFTITLEQKKIAGGSCTTTEDGGEDILCAKLHLVDLAGSERAKRTGADGMRLKEGIHINKGLLALGNVISALGDEKKRKEGGHVPYRDSKLTRLLQDSLGGNSKTVMIACVSPADTNAEETLNTLKYANRARNIQNKAVINRDPATAQMQRMRSQIEQLQTELLFYRGDSGAFDELQILKHKISLLEASNRELHNELQERRVASEHFSKRAYDAQVEKDKLIMIIESVRNGKSLDEIESCQNEDVGLVNKYVSKIQELEGELLHIKNLKKTSNHQYSDDSYDVGPRSNNVLFPSSNESSDCEDKVMDVTDELEFQEKEIEHCSLQEKLDMELKELDKRLEEKEAEMKRFSSGGTSVLKQHYEKKVYDLEQEKRALQREIEGLRHNLASIPSGPGDGAQKLKEEYVQKLNTLETQVSVLKKKQDAQAQLMRQKQKSDDAAIKLQDEIHRIKSQKVQLQQKIKQESEQFRAWKASREKEVMQLKKEGRRNEYEMHKLMALNQKQKLVLQRKTEEASQVTKRLKELLDNRKASSRETLSGANGPGTQALMQAIEHEIEVTVRVHEVRSEYERQTEERARMAKEVARLREENELLKNAKISVHGDTMSPGARNSRIFALENMLATSSSTLVSMASQLSEAEERERVFGGRGRWNQVRTLGDAKSIMNYLFNLASTARCLARDKEADCREKDVLIRDLKEKIVKFSSYVRYMEIQKADLVHQVKAQTSAMKKLSADENLKNEHSMKKQETRNSTIVLEDMDTSDSEASDHEREDPDLDDEWKPEHESERESEQESVIKLNRKRNFKVGRRRSSVVMRRSYEENSETPSDDAVKSDVCCCTCSKSSSCKTMKCQCRATKGSCGPSCGCSSVKCSNRNADGKENNSISESEALENGENSQESDEKDKGQQQQVLASRGAMLLQNALADKPEEETNDDGGTRRRRKPLSDIGNTTGKSNVPRPSQRKKWKKTVLQLVPVGPPALPPTHTNTHLIPEANSVTVDSDTARMPENSDSGESNSIKLKLPRAMRSASSNGSNLLRERNADQNGSESGGNSGFVQSNSGRASGSRTSDEKENHTRRV.

The Kinesin motor domain occupies 6 to 360 (CVRVAVNIRP…LKYANRARNI (355 aa)). Residue 85–92 (GQTGSGKT) coordinates ATP. 3 coiled-coil regions span residues 580-615 (TSVL…LASI), 653-697 (QLMR…RAWK), and 781-823 (EVTV…AKIS). 2 stretches are compositionally biased toward basic and acidic residues: residues 956–971 (ADEN…KQET) and 1001–1013 (EWKP…RESE). Disordered stretches follow at residues 956–1018 (ADEN…ESVI), 1097–1132 (NADG…QQQV), 1144–1187 (ALAD…RKKW), and 1200–1300 (PALP…TRRV). 4 stretches are compositionally biased toward polar residues: residues 1169–1180 (IGNTTGKSNVPR), 1205–1222 (THTN…TVDS), 1230–1239 (NSDSGESNSI), and 1275–1288 (GFVQ…SGSR). Basic and acidic residues predominate over residues 1289–1300 (TSDEKENHTRRV).

It belongs to the TRAFAC class myosin-kinesin ATPase superfamily. Kinesin family. KIN-4 subfamily. In terms of assembly, homodimer.

Kinesin-like motor protein involved in the control of the oriented deposition of cellulose microfibrils. This is Kinesin-like protein KIN-4C from Arabidopsis thaliana (Mouse-ear cress).